Here is a 1264-residue protein sequence, read N- to C-terminus: Ubiquitin carboxyl-terminal hydrolase usp-48 (1264 aa).

The USP domain maps to 108 to 430; that stretch reads AGLINGGNFC…ACYGLLYRRR (323 aa). The active-site Nucleophile is the Cys-117. His-366 functions as the Proton acceptor in the catalytic mechanism. 3 disordered regions span residues 390–415, 522–610, and 630–679; these read IPKPPGTEKPTTAKTEKSRKKDKEKY, AKGE…IMDT, and TVEV…PVSS. 2 stretches are compositionally biased toward basic and acidic residues: residues 403-415 and 532-543; these read KTEKSRKKDKEKY and EASENEEKKKNE. Positions 516 to 547 form a coiled coil; that stretch reads AQEYEVAKGEKKKKKKEASENEEKKKNEEDEA. A compositionally biased stretch (low complexity) spans 565–575; the sequence is SEPSTSAAATE. Composition is skewed to polar residues over residues 587–599 and 663–678; these read ETPNPENAESTQV and NGTNGTNSSPQKQPVS.

It belongs to the peptidase C19 family. As to expression, broadly expressed. Expressed in germline.

Its subcellular location is the nucleus. The protein localises to the chromosome. It catalyses the reaction Thiol-dependent hydrolysis of ester, thioester, amide, peptide and isopeptide bonds formed by the C-terminal Gly of ubiquitin (a 76-residue protein attached to proteins as an intracellular targeting signal).. Functionally, recognizes and hydrolyzes the peptide bond at the C-terminal Gly of ubiquitin. Involved in the processing of poly-ubiquitin precursors as well as that of ubiquitinated proteins. Required post-developmentally to restrict the plasticity of epidermal cells, probably by regulating gene expression. This is Ubiquitin carboxyl-terminal hydrolase usp-48 from Caenorhabditis elegans.